The sequence spans 34 residues: Conotoxin S4.3 (34 aa).

Position 1 is a pyrrolidone carboxylic acid (Q1). E3 carries the 4-carboxyglutamate modification. Residue S7 is glycosylated (O-linked (HexNAc...) serine). An O-linked (HexNAc...) threonine glycan is attached at T9. 4 positions are modified to 4-hydroxyproline: P17, P22, P31, and P32.

This sequence belongs to the conotoxin A superfamily. Contains 3 disulfide bonds. Expressed by the venom duct.

It localises to the secreted. Its function is as follows. Probable neurotoxin with ion channel inhibitor activity. This Conus striatus (Striated cone) protein is Conotoxin S4.3.